The primary structure comprises 495 residues: UDP-N-acetylmuramate--L-alanine ligase (495 aa).

120 to 126 contributes to the ATP binding site; sequence GSHGKTT.

It belongs to the MurCDEF family.

It localises to the cytoplasm. It catalyses the reaction UDP-N-acetyl-alpha-D-muramate + L-alanine + ATP = UDP-N-acetyl-alpha-D-muramoyl-L-alanine + ADP + phosphate + H(+). Its pathway is cell wall biogenesis; peptidoglycan biosynthesis. Functionally, cell wall formation. The protein is UDP-N-acetylmuramate--L-alanine ligase of Rickettsia prowazekii (strain Madrid E).